Reading from the N-terminus, the 628-residue chain is Nucleoside-triphosphatase 2 (628 aa).

The first 25 residues, 1–25 (MWLPVYVPLLLVFGVSLSLPHGSLG), serve as a signal peptide directing secretion. The active-site Proton acceptor is Glu236. Asn432 is a glycosylation site (N-linked (GlcNAc...) asparagine).

This sequence belongs to the GDA1/CD39 NTPase family. Homotetramer.

The protein resides in the secreted. The protein localises to the parasitophorous vacuole. It catalyses the reaction a ribonucleoside 5'-triphosphate + H2O = a ribonucleoside 5'-diphosphate + phosphate + H(+). Its function is as follows. May perform an important processing step in the conversion of high energy nucleotides prior to uptake by the parasite. NTPAse-II has a specific activity 4.5-fold lower than NTPAse-I in hydrolysis of ATP. The primary difference between these isozymes lies in their ability to hydrolyze nucleoside triphosphate versus diphosphate substrates. While NTPAse-II hydrolyzes ATP to ADP and ADP to AMP at almost the same rate, NTPAse-I hydrolyzes ADP to AMP at a much slower rate (0.7% of the rate for ATP). This is Nucleoside-triphosphatase 2 (NTP1) from Toxoplasma gondii.